A 270-amino-acid chain; its full sequence is 5'-AMP-activated protein kinase subunit beta-1 (270 aa).

Positions 1-43 (MGNTSSERAALERQAGHKTPRRDSSGGTKDGDRPKILMDSPED) are disordered. Glycine 2 carries N-myristoyl glycine lipidation. At threonine 4 the chain carries Phosphothreonine. Phosphoserine occurs at positions 5 and 6. Over residues 9–36 (AALERQAGHKTPRRDSSGGTKDGDRPKI) the composition is skewed to basic and acidic residues. A Phosphothreonine modification is found at threonine 19. Phosphoserine; by autocatalysis occurs at positions 24 and 25. Residues serine 40, serine 96, and serine 101 each carry the phosphoserine modification. The tract at residues 68–163 (EVNEKAPAQA…QVKKTDFEVF (96 aa)) is glycogen-binding domain. Residue serine 108 is modified to Phosphoserine; by autocatalysis. The residue at position 148 (threonine 148) is a Phosphothreonine. Phosphoserine is present on serine 182. Position 201 is an N6-succinyllysine (lysine 201).

Belongs to the 5'-AMP-activated protein kinase beta subunit family. As to quaternary structure, AMPK is a heterotrimer of an alpha catalytic subunit (PRKAA1 or PRKAA2), a beta (PRKAB1 or PRKAB2) and a gamma non-catalytic subunits (PRKAG1, PRKAG2 or PRKAG3). Interacts with FNIP1 and FNIP2. Phosphorylated when associated with the catalytic subunit (PRKAA1 or PRKAA2). Phosphorylated by ULK1; leading to negatively regulate AMPK activity and suggesting the existence of a regulatory feedback loop between ULK1 and AMPK. Highly expressed in kidney, heart, white adipose tissue, lung and spleen.

Non-catalytic subunit of AMP-activated protein kinase (AMPK), an energy sensor protein kinase that plays a key role in regulating cellular energy metabolism. In response to reduction of intracellular ATP levels, AMPK activates energy-producing pathways and inhibits energy-consuming processes: inhibits protein, carbohydrate and lipid biosynthesis, as well as cell growth and proliferation. AMPK acts via direct phosphorylation of metabolic enzymes, and by longer-term effects via phosphorylation of transcription regulators. Also acts as a regulator of cellular polarity by remodeling the actin cytoskeleton; probably by indirectly activating myosin. Beta non-catalytic subunit acts as a scaffold on which the AMPK complex assembles, via its C-terminus that bridges alpha (PRKAA1 or PRKAA2) and gamma subunits (PRKAG1, PRKAG2 or PRKAG3). The chain is 5'-AMP-activated protein kinase subunit beta-1 (Prkab1) from Rattus norvegicus (Rat).